We begin with the raw amino-acid sequence, 432 residues long: Adenylosuccinate synthetase (432 aa).

GTP is bound by residues 13–19 (GDEGKGK) and 41–43 (GHT). Aspartate 14 acts as the Proton acceptor in catalysis. Positions 14 and 41 each coordinate Mg(2+). IMP is bound by residues 14–17 (DEGK), 39–42 (NAGH), threonine 130, arginine 144, glutamine 225, threonine 240, and arginine 304. The Proton donor role is filled by histidine 42. 300–306 (AVTGRPR) provides a ligand contact to substrate. GTP contacts are provided by residues arginine 306, 332–334 (KLD), and 415–417 (STG).

Belongs to the adenylosuccinate synthetase family. Homodimer. It depends on Mg(2+) as a cofactor.

The protein localises to the cytoplasm. It carries out the reaction IMP + L-aspartate + GTP = N(6)-(1,2-dicarboxyethyl)-AMP + GDP + phosphate + 2 H(+). It participates in purine metabolism; AMP biosynthesis via de novo pathway; AMP from IMP: step 1/2. Its function is as follows. Plays an important role in the de novo pathway of purine nucleotide biosynthesis. Catalyzes the first committed step in the biosynthesis of AMP from IMP. The chain is Adenylosuccinate synthetase from Haemophilus ducreyi (strain 35000HP / ATCC 700724).